We begin with the raw amino-acid sequence, 328 residues long: tRNA dimethylallyltransferase (328 aa).

25-32 is a binding site for ATP; that stretch reads GNTGSGKS. 27-32 is a substrate binding site; it reads TGSGKS. The interaction with substrate tRNA stretch occupies residues 50 to 53; it reads DSRQ.

Belongs to the IPP transferase family. In terms of assembly, monomer. Requires Mg(2+) as cofactor.

It catalyses the reaction adenosine(37) in tRNA + dimethylallyl diphosphate = N(6)-dimethylallyladenosine(37) in tRNA + diphosphate. In terms of biological role, catalyzes the transfer of a dimethylallyl group onto the adenine at position 37 in tRNAs that read codons beginning with uridine, leading to the formation of N6-(dimethylallyl)adenosine (i(6)A). The polypeptide is tRNA dimethylallyltransferase (Dehalococcoides mccartyi (strain ATCC BAA-2100 / JCM 16839 / KCTC 5957 / BAV1)).